The following is a 310-amino-acid chain: Transcription factor MYB53 (310 aa).

2 HTH myb-type domains span residues 9–61 and 62–116; these read ETGL…TNYL and RPDI…KKKL. 2 consecutive DNA-binding regions (H-T-H motif) follow at residues 37 to 61 and 89 to 112; these read WSAL…TNYL and WSMI…NTHL.

Interacts with FBX5. In terms of tissue distribution, highly expressed in roots and at lower levels in leaves, stems and flowers.

The protein resides in the nucleus. Its function is as follows. Probable transcription factor. The polypeptide is Transcription factor MYB53 (Arabidopsis thaliana (Mouse-ear cress)).